The following is a 688-amino-acid chain: MQPTRSVRPFKVVSDYSPSGDQPTAIAELAGRVNAGEPDVVLLGATGTGKSATAAWLIEKVQRPTLILAHNKTLAAQLATEFRELMPDNAVEYFVSYYDYYQPEAYVPQTDTFIEKDSSVNAEVERLRHSTTNSLLSRRDVVVVSTVSCIYGLGQPEQYMNAMVALQVGMQIDRDTLIRKFVSMQYQRNDVDFSRGNFRVRGDTIEIIPMYEELAIRIEMFGDEIEALYQLHPLTGDVVRKMDSVSVFPGSHYVAETEVMRRAIGTIQQELEERLTVLEREGKLLEAQRLRMRTNFDIEMMQQIGFCSGIENYSRHIDGRDAGEAPHCLLDYFPDDFLVVIDESHVTVPQIGAMFEGDSSRKRTLVEHGFRLPSALDNRPLKWNEFTERVPQTVYMSATPGKYELGMGDGVVEQIIRPTGLIDPAIVVKPTKGQIDDLLEQIRIRVEKDERILVTTLTKKMAEELTDYFAEAGVRVRYLHSDVDTLRRVELLSELRAGVYDVLVGINLLREGLDLPEVSLVAILDADKEGFLRSSTSLIQTIGRAARNVSGEVHMYADVLTDSMKRAIEETDRRREKQVAYNTEHGIDPTPLRKRIADITEILAREGEDTKKMLEGRGGGKRSPTPNLRREGKAAAGANELETIISDLNDQMLQAAGELKFELAARLRDELGDLKRELRQMEKAGHLS.

One can recognise a Helicase ATP-binding domain in the interval 31-188; sequence GRVNAGEPDV…RKFVSMQYQR (158 aa). Residue 44–51 participates in ATP binding; it reads GATGTGKS. Positions 97–120 match the Beta-hairpin motif; it reads YYDYYQPEAYVPQTDTFIEKDSSV. One can recognise a Helicase C-terminal domain in the interval 434–587; the sequence is QIDDLLEQIR…QVAYNTEHGI (154 aa). The disordered stretch occupies residues 607-632; sequence GEDTKKMLEGRGGGKRSPTPNLRREG. The 36-residue stretch at 642–677 folds into the UVR domain; it reads ETIISDLNDQMLQAAGELKFELAARLRDELGDLKRE.

This sequence belongs to the UvrB family. Forms a heterotetramer with UvrA during the search for lesions. Interacts with UvrC in an incision complex.

The protein resides in the cytoplasm. The UvrABC repair system catalyzes the recognition and processing of DNA lesions. A damage recognition complex composed of 2 UvrA and 2 UvrB subunits scans DNA for abnormalities. Upon binding of the UvrA(2)B(2) complex to a putative damaged site, the DNA wraps around one UvrB monomer. DNA wrap is dependent on ATP binding by UvrB and probably causes local melting of the DNA helix, facilitating insertion of UvrB beta-hairpin between the DNA strands. Then UvrB probes one DNA strand for the presence of a lesion. If a lesion is found the UvrA subunits dissociate and the UvrB-DNA preincision complex is formed. This complex is subsequently bound by UvrC and the second UvrB is released. If no lesion is found, the DNA wraps around the other UvrB subunit that will check the other stand for damage. In Clavibacter michiganensis subsp. michiganensis (strain NCPPB 382), this protein is UvrABC system protein B.